A 168-amino-acid polypeptide reads, in one-letter code: MKTYRRRIREKIIQALYTIELTGADMDSASDWLITPQIAEDSGAVRFYKQVLQSIQDHKEEIDGYITKHTFNWDMSRIAIIDKNILRMALAELLYFEDIPPKVSINEAIEIAKKFNSTDKSSKFVNGILDATYNDLKSSGKIKKCGRGLINNSSRNTSRSEEKHSTEK.

The interval 147 to 168 is disordered; the sequence is RGLINNSSRNTSRSEEKHSTEK. The segment covering 158 to 168 has biased composition (basic and acidic residues); that stretch reads SRSEEKHSTEK.

The protein belongs to the NusB family.

Functionally, involved in transcription antitermination. Required for transcription of ribosomal RNA (rRNA) genes. Binds specifically to the boxA antiterminator sequence of the ribosomal RNA (rrn) operons. This is Transcription antitermination protein NusB from Chlorobium phaeobacteroides (strain BS1).